The chain runs to 754 residues: Ribosomal RNA large subunit methyltransferase K/L (754 aa).

One can recognise a THUMP domain in the interval 46 to 157 (TAYRLCLWSR…RGEAILSLDL (112 aa)).

Belongs to the methyltransferase superfamily. RlmKL family.

The protein localises to the cytoplasm. It carries out the reaction guanosine(2445) in 23S rRNA + S-adenosyl-L-methionine = N(2)-methylguanosine(2445) in 23S rRNA + S-adenosyl-L-homocysteine + H(+). The enzyme catalyses guanosine(2069) in 23S rRNA + S-adenosyl-L-methionine = N(2)-methylguanosine(2069) in 23S rRNA + S-adenosyl-L-homocysteine + H(+). Its function is as follows. Specifically methylates the guanine in position 2445 (m2G2445) and the guanine in position 2069 (m7G2069) of 23S rRNA. This Pseudomonas fluorescens (strain ATCC BAA-477 / NRRL B-23932 / Pf-5) protein is Ribosomal RNA large subunit methyltransferase K/L.